A 151-amino-acid chain; its full sequence is Superoxide dismutase [Cu-Zn] A (151 aa).

Residue Cys6 is the site of S-palmitoyl cysteine attachment. Cu cation is bound by residues His45, His47, and His62. Cys56 and Cys144 are oxidised to a cystine. Zn(2+) contacts are provided by His62, His70, His79, and Asp82. A Cu cation-binding site is contributed by His118.

Belongs to the Cu-Zn superoxide dismutase family. As to quaternary structure, homodimer, and heterodimer of Superoxide dismutase [Cu-Zn] A and B. Cu cation is required as a cofactor. Zn(2+) serves as cofactor.

The protein resides in the cytoplasm. It localises to the nucleus. It carries out the reaction 2 superoxide + 2 H(+) = H2O2 + O2. Destroys radicals which are normally produced within the cells and which are toxic to biological systems. The sequence is that of Superoxide dismutase [Cu-Zn] A (sod1-a) from Xenopus laevis (African clawed frog).